A 172-amino-acid polypeptide reads, in one-letter code: Large ribosomal subunit protein uL22y (172 aa).

Belongs to the universal ribosomal protein uL22 family.

The polypeptide is Large ribosomal subunit protein uL22y (Hordeum vulgare (Barley)).